A 485-amino-acid chain; its full sequence is Glutamyl-tRNA(Gln) amidotransferase subunit A (485 aa).

Catalysis depends on charge relay system residues K78 and S153. S177 (acyl-ester intermediate) is an active-site residue.

It belongs to the amidase family. GatA subfamily. In terms of assembly, heterotrimer of A, B and C subunits.

The catalysed reaction is L-glutamyl-tRNA(Gln) + L-glutamine + ATP + H2O = L-glutaminyl-tRNA(Gln) + L-glutamate + ADP + phosphate + H(+). Functionally, allows the formation of correctly charged Gln-tRNA(Gln) through the transamidation of misacylated Glu-tRNA(Gln) in organisms which lack glutaminyl-tRNA synthetase. The reaction takes place in the presence of glutamine and ATP through an activated gamma-phospho-Glu-tRNA(Gln). This is Glutamyl-tRNA(Gln) amidotransferase subunit A from Bacillus cereus (strain ZK / E33L).